We begin with the raw amino-acid sequence, 207 residues long: Nudix hydrolase 4 (207 aa).

The Nudix hydrolase domain occupies G58–I194. The Nudix box motif lies at G101–G122. The Mg(2+) site is built by E116 and E120.

Belongs to the Nudix hydrolase family. The cofactor is Mg(2+). Mn(2+) is required as a cofactor. Expressed in roots, stems and leaves.

It carries out the reaction ADP-D-ribose + H2O = D-ribose 5-phosphate + AMP + 2 H(+). The catalysed reaction is NAD(+) + H2O = beta-nicotinamide D-ribonucleotide + AMP + 2 H(+). The enzyme catalyses NADH + H2O = reduced beta-nicotinamide D-ribonucleotide + AMP + 2 H(+). In terms of biological role, probably mediates the hydrolysis of some nucleoside diphosphate derivatives. In vitro, it can use both NADH and ADP-ribose as substrates; however the relevance of such substrates in vivo is unclear. This Arabidopsis thaliana (Mouse-ear cress) protein is Nudix hydrolase 4 (NUDT4).